Reading from the N-terminus, the 95-residue chain is Transcription and mRNA export factor ENY2-1 (95 aa).

Belongs to the ENY2 family. As to quaternary structure, component of the nuclear pore complex (NPC)-associated TREX-2 complex (transcription and export complex 2). Component of the SAGA transcription coactivator-HAT complex. Within the SAGA complex, participates in a subcomplex of SAGA called the DUB module (deubiquitination module).

Its subcellular location is the nucleus. The protein localises to the nucleoplasm. Involved in mRNA export coupled transcription activation by association with both the TREX-2 and the SAGA complexes. The transcription regulatory histone acetylation (HAT) complex SAGA is a multiprotein complex that activates transcription by remodeling chromatin and mediating histone acetylation and deubiquitination. Within the SAGA complex, participates in a subcomplex that specifically deubiquitinates histones. The SAGA complex is recruited to specific gene promoters by activators, where it is required for transcription. The TREX-2 complex functions in docking export-competent ribonucleoprotein particles (mRNPs) to the nuclear entrance of the nuclear pore complex (nuclear basket). TREX-2 participates in mRNA export and accurate chromatin positioning in the nucleus by tethering genes to the nuclear periphery. This Salmo salar (Atlantic salmon) protein is Transcription and mRNA export factor ENY2-1 (eny2-1).